The primary structure comprises 433 residues: Serine hydroxymethyltransferase (433 aa).

(6S)-5,6,7,8-tetrahydrofolate-binding positions include L127 and 131-133; that span reads GHL. K236 carries the post-translational modification N6-(pyridoxal phosphate)lysine.

The protein belongs to the SHMT family. As to quaternary structure, homodimer. Pyridoxal 5'-phosphate is required as a cofactor.

Its subcellular location is the cytoplasm. It catalyses the reaction (6R)-5,10-methylene-5,6,7,8-tetrahydrofolate + glycine + H2O = (6S)-5,6,7,8-tetrahydrofolate + L-serine. Its pathway is one-carbon metabolism; tetrahydrofolate interconversion. The protein operates within amino-acid biosynthesis; glycine biosynthesis; glycine from L-serine: step 1/1. Its function is as follows. Catalyzes the reversible interconversion of serine and glycine with tetrahydrofolate (THF) serving as the one-carbon carrier. This reaction serves as the major source of one-carbon groups required for the biosynthesis of purines, thymidylate, methionine, and other important biomolecules. Also exhibits THF-independent aldolase activity toward beta-hydroxyamino acids, producing glycine and aldehydes, via a retro-aldol mechanism. The protein is Serine hydroxymethyltransferase of Corynebacterium urealyticum (strain ATCC 43042 / DSM 7109).